The sequence spans 429 residues: Glucose-1-phosphate adenylyltransferase (429 aa).

Residues Tyr116, Gly181, 196 to 197 (EK), and Ser214 contribute to the alpha-D-glucose 1-phosphate site.

Belongs to the bacterial/plant glucose-1-phosphate adenylyltransferase family. As to quaternary structure, homotetramer.

The enzyme catalyses alpha-D-glucose 1-phosphate + ATP + H(+) = ADP-alpha-D-glucose + diphosphate. Its pathway is glycan biosynthesis; glycogen biosynthesis. In terms of biological role, involved in the biosynthesis of ADP-glucose, a building block required for the elongation reactions to produce glycogen. Catalyzes the reaction between ATP and alpha-D-glucose 1-phosphate (G1P) to produce pyrophosphate and ADP-Glc. The protein is Glucose-1-phosphate adenylyltransferase of Paramagnetospirillum magneticum (strain ATCC 700264 / AMB-1) (Magnetospirillum magneticum).